The primary structure comprises 453 residues: DNA repair protein RadA (453 aa).

A C4-type zinc finger spans residues 10-27; sequence CQECGYQSPKYLGRCPNC. 95-102 is a binding site for ATP; that stretch reads GDPGIGKS. The RadA KNRFG motif motif lies at 251–255; the sequence is KNRFG. The interval 350 to 453 is lon-protease-like; it reads DAYLKSAGGV…VGQVLKAVFS (104 aa).

This sequence belongs to the RecA family. RadA subfamily.

In terms of biological role, DNA-dependent ATPase involved in processing of recombination intermediates, plays a role in repairing DNA breaks. Stimulates the branch migration of RecA-mediated strand transfer reactions, allowing the 3' invading strand to extend heteroduplex DNA faster. Binds ssDNA in the presence of ADP but not other nucleotides, has ATPase activity that is stimulated by ssDNA and various branched DNA structures, but inhibited by SSB. Does not have RecA's homology-searching function. This is DNA repair protein RadA from Streptococcus pyogenes serotype M3 (strain ATCC BAA-595 / MGAS315).